A 246-amino-acid polypeptide reads, in one-letter code: Indole-3-glycerol phosphate synthase (246 aa).

Belongs to the TrpC family.

The catalysed reaction is 1-(2-carboxyphenylamino)-1-deoxy-D-ribulose 5-phosphate + H(+) = (1S,2R)-1-C-(indol-3-yl)glycerol 3-phosphate + CO2 + H2O. Its pathway is amino-acid biosynthesis; L-tryptophan biosynthesis; L-tryptophan from chorismate: step 4/5. The sequence is that of Indole-3-glycerol phosphate synthase from Sulfurisphaera tokodaii (strain DSM 16993 / JCM 10545 / NBRC 100140 / 7) (Sulfolobus tokodaii).